Consider the following 254-residue polypeptide: Ubiquinone/menaquinone biosynthesis C-methyltransferase UbiE (254 aa).

S-adenosyl-L-methionine contacts are provided by residues threonine 77, aspartate 98, 126-127, and serine 143; that span reads NA.

This sequence belongs to the class I-like SAM-binding methyltransferase superfamily. MenG/UbiE family.

The enzyme catalyses a 2-demethylmenaquinol + S-adenosyl-L-methionine = a menaquinol + S-adenosyl-L-homocysteine + H(+). The catalysed reaction is a 2-methoxy-6-(all-trans-polyprenyl)benzene-1,4-diol + S-adenosyl-L-methionine = a 5-methoxy-2-methyl-3-(all-trans-polyprenyl)benzene-1,4-diol + S-adenosyl-L-homocysteine + H(+). Its pathway is quinol/quinone metabolism; menaquinone biosynthesis; menaquinol from 1,4-dihydroxy-2-naphthoate: step 2/2. It functions in the pathway cofactor biosynthesis; ubiquinone biosynthesis. Methyltransferase required for the conversion of demethylmenaquinol (DMKH2) to menaquinol (MKH2) and the conversion of 2-polyprenyl-6-methoxy-1,4-benzoquinol (DDMQH2) to 2-polyprenyl-3-methyl-6-methoxy-1,4-benzoquinol (DMQH2). This chain is Ubiquinone/menaquinone biosynthesis C-methyltransferase UbiE, found in Hydrogenovibrio crunogenus (strain DSM 25203 / XCL-2) (Thiomicrospira crunogena).